The following is a 333-amino-acid chain: Flap endonuclease 1 (333 aa).

Positions 1–99 are N-domain; that stretch reads MGVALRDILA…ETNAERKKLR (99 aa). Residues Asp-28, Asp-81, Glu-153, Glu-155, Asp-174, Asp-176, and Asp-235 each coordinate Mg(2+). Residues 117–256 form an I-domain region; it reads EAYRQARSAT…TALKIVKSGG (140 aa). The interaction with PCNA stretch occupies residues 325 to 333; that stretch reads GQKTLESFF.

The protein belongs to the XPG/RAD2 endonuclease family. FEN1 subfamily. In terms of assembly, interacts with PCNA. PCNA stimulates the nuclease activity without altering cleavage specificity. Mg(2+) is required as a cofactor.

Its function is as follows. Structure-specific nuclease with 5'-flap endonuclease and 5'-3' exonuclease activities involved in DNA replication and repair. During DNA replication, cleaves the 5'-overhanging flap structure that is generated by displacement synthesis when DNA polymerase encounters the 5'-end of a downstream Okazaki fragment. Binds the unpaired 3'-DNA end and kinks the DNA to facilitate 5' cleavage specificity. Cleaves one nucleotide into the double-stranded DNA from the junction in flap DNA, leaving a nick for ligation. Also involved in the base excision repair (BER) pathway. Acts as a genome stabilization factor that prevents flaps from equilibrating into structures that lead to duplications and deletions. Also possesses 5'-3' exonuclease activity on nicked or gapped double-stranded DNA. The chain is Flap endonuclease 1 from Methanoregula boonei (strain DSM 21154 / JCM 14090 / 6A8).